The chain runs to 515 residues: MDEFHRCGKEDSFWQQCFLYPLFFQEDLYAISHDHYLDVSSSSRPMEHLSSNDQLSFLTVKRLIGQIRQQNHSIVLFVNCDPNPLADRKKSFYSESVLEALTLVLEVPFSIWSKSSVEGMNESKSFRSIHSIFPFLEDKFPHSNSILDARIPYSIHPEILVRTFRRWIRDAPSLHPLRSVLYEYRNSPDNLQRSIIVVPRVNTRFFLFLWNYYVCECESILFSRLKRSSHSRSLSHGSFPHRTHFHRKIKHIIIFSRRNSLKSIWSLKDPKIHYVRYGERPIIAIKGAHLLVKKCRYYLLIFRQFYFHLWSEPYRVCSHQLSKNCSSSPGYFLRVRMNPILVRTKMLDELFIADLITDEIDPIVPIVPIIGLLATEKFCDISGRPISKLSWTSLTDDDILDRFDQIWRNLFHYYSGSFDRDGLYRIKYILSLSCAKTLACKHKSTIRVVRKELGPELFKKSFSKEREFYSLRFSSKAAARSQRERIWHSDIPQINPLANSWQKIQDLKIENLFDQ.

It belongs to the intron maturase 2 family. MatK subfamily.

The protein localises to the plastid. Its subcellular location is the chloroplast. Its function is as follows. Usually encoded in the trnK tRNA gene intron. Probably assists in splicing its own and other chloroplast group II introns. The protein is Maturase K of Pinus elliottii (Slash pine).